We begin with the raw amino-acid sequence, 131 residues long: Bacteriohemerythrin (131 aa).

The Fe cation site is built by His20, Glu23, His56, Glu60, His75, His79, His117, and Asp122.

This sequence belongs to the hemerythrin family. As to quaternary structure, monomer.

Oxygen-binding protein. May be involved in a storage mechanism or for delivery to oxygen-requiring enzymes. The oxygen-binding site contains two iron atoms. This Aquifex aeolicus (strain VF5) protein is Bacteriohemerythrin.